The sequence spans 142 residues: Nucleoside diphosphate kinase (142 aa).

ATP is bound by residues Lys11, Phe59, Arg87, Thr93, Arg104, and Asn114. The Pros-phosphohistidine intermediate role is filled by His117.

It belongs to the NDK family. In terms of assembly, homotetramer. Mg(2+) serves as cofactor.

The protein localises to the cytoplasm. It catalyses the reaction a 2'-deoxyribonucleoside 5'-diphosphate + ATP = a 2'-deoxyribonucleoside 5'-triphosphate + ADP. The enzyme catalyses a ribonucleoside 5'-diphosphate + ATP = a ribonucleoside 5'-triphosphate + ADP. In terms of biological role, major role in the synthesis of nucleoside triphosphates other than ATP. The ATP gamma phosphate is transferred to the NDP beta phosphate via a ping-pong mechanism, using a phosphorylated active-site intermediate. This is Nucleoside diphosphate kinase from Wigglesworthia glossinidia brevipalpis.